A 574-amino-acid polypeptide reads, in one-letter code: Arginine--tRNA ligase (574 aa).

Positions 124 to 134 (ANPNGPLHIGH) match the 'HIGH' region motif.

Belongs to the class-I aminoacyl-tRNA synthetase family.

It is found in the cytoplasm. It catalyses the reaction tRNA(Arg) + L-arginine + ATP = L-arginyl-tRNA(Arg) + AMP + diphosphate. The protein is Arginine--tRNA ligase of Methanococcus aeolicus (strain ATCC BAA-1280 / DSM 17508 / OCM 812 / Nankai-3).